The primary structure comprises 527 residues: Putative BTB/POZ domain and WD-repeat protein R783 (527 aa).

The BTB domain maps to 45 to 115 (TDVTIVLDDG…FYSQNTDTRN (71 aa)). WD repeat units follow at residues 215–266 (IHGD…VEAS), 272–310 (NVKT…LIKT), 313–353 (KHKN…IVRC), 355–391 (ISPV…FLFK), and 436–476 (YCPS…DNKY).

The protein belongs to the mimivirus BTB/WD family.

This is Putative BTB/POZ domain and WD-repeat protein R783 from Acanthamoeba polyphaga (Amoeba).